The chain runs to 386 residues: Chaperone protein DnaJ (386 aa).

Positions 4-68 constitute a J domain; that stretch reads NFYDVLGVSR…QKRQQYDQLG (65 aa). 2 stretches are compositionally biased toward basic and acidic residues: residues 22–35 and 43–79; these read KAYR…HPDV and ERFK…DKRG. The interval 22 to 132 is disordered; it reads KAYRKQAAEH…GGNRPRQGQD (111 aa). Composition is skewed to gly residues over residues 80–104 and 113–125; these read ATGG…GAGG and FGGG…GGGN. The segment at 147–229 adopts a CR-type zinc-finger fold; it reads GATKEVTLTR…CGGDGVVREE (83 aa). Positions 160, 163, 177, 180, 203, 206, 217, and 220 each coordinate Zn(2+). 4 CXXCXGXG motif repeats span residues 160 to 167, 177 to 184, 203 to 210, and 217 to 224; these read CDTCDGAG, CSQCNGRG, CPRCEGSG, and CADCGGDG.

It belongs to the DnaJ family. In terms of assembly, homodimer. Zn(2+) is required as a cofactor.

It localises to the cytoplasm. In terms of biological role, participates actively in the response to hyperosmotic and heat shock by preventing the aggregation of stress-denatured proteins and by disaggregating proteins, also in an autonomous, DnaK-independent fashion. Unfolded proteins bind initially to DnaJ; upon interaction with the DnaJ-bound protein, DnaK hydrolyzes its bound ATP, resulting in the formation of a stable complex. GrpE releases ADP from DnaK; ATP binding to DnaK triggers the release of the substrate protein, thus completing the reaction cycle. Several rounds of ATP-dependent interactions between DnaJ, DnaK and GrpE are required for fully efficient folding. Also involved, together with DnaK and GrpE, in the DNA replication of plasmids through activation of initiation proteins. The chain is Chaperone protein DnaJ from Halorubrum lacusprofundi (strain ATCC 49239 / DSM 5036 / JCM 8891 / ACAM 34).